A 216-amino-acid chain; its full sequence is Cytochrome c oxidase assembly protein CtaG (216 aa).

The span at 1-23 (MTDAPQHPQQPATGTPATPKAAP) shows a compositional bias: low complexity. Positions 1–24 (MTDAPQHPQQPATGTPATPKAAPR) are disordered. The Cytoplasmic portion of the chain corresponds to 1–26 (MTDAPQHPQQPATGTPATPKAAPRVG). A helical; Signal-anchor for type II membrane protein membrane pass occupies residues 27–49 (RDVRIGATCGLLVALMVGAAYAA). Topologically, residues 50 to 216 (VPFYNWFCRA…SEPDRPGGSI (167 aa)) are periplasmic.

It belongs to the COX11/CtaG family.

The protein localises to the cell inner membrane. Exerts its effect at some terminal stage of cytochrome c oxidase synthesis, probably by being involved in the insertion of the copper B into subunit I. The polypeptide is Cytochrome c oxidase assembly protein CtaG (Nitrobacter hamburgensis (strain DSM 10229 / NCIMB 13809 / X14)).